A 466-amino-acid chain; its full sequence is cGMP-specific 3',5'-cGMP phosphodiesterase 3 (466 aa).

Over residues 1-120 (MAPQQNIMKQ…NSNNNNSNNN (120 aa)) the composition is skewed to low complexity. The disordered stretch occupies residues 1–150 (MAPQQNIMKQ…NNNKIRGYND (150 aa)). Acidic residues predominate over residues 123–134 (DDEEEEGDDEDN). Positions 135–150 (NNNNNSNNNKIRGYND) are enriched in low complexity. In terms of domain architecture, PDEase spans 137-458 (NNNSNNNKIR…EIWSNNGSSS (322 aa)). Catalysis depends on histidine 213, which acts as the Proton donor. Residues histidine 217, histidine 253, aspartate 254, and aspartate 364 each contribute to the a divalent metal cation site.

This sequence belongs to the cyclic nucleotide phosphodiesterase family. The cofactor is a divalent metal cation.

The protein localises to the cytoplasm. It is found in the cytosol. The catalysed reaction is 3',5'-cyclic GMP + H2O = GMP + H(+). Its activity is regulated as follows. Inhibited by 3-isobutyl-1-methylxanthine (IBMX). Its function is as follows. Phosphodiesterase specific for cGMP, which is not activated by cGMP. Involved in the degradation of intracellular cGMP. The polypeptide is cGMP-specific 3',5'-cGMP phosphodiesterase 3 (pde3) (Dictyostelium discoideum (Social amoeba)).